The sequence spans 663 residues: (R)-specific secondary-alkylsulfatase (663 aa).

An N-terminal signal peptide occupies residues 1–28 (MSRFIRASQRRTLLATLIAATLAQPLLA). Positions 179, 181, 183, and 184 each coordinate Zn(2+). Q232 provides a ligand contact to sulfate. The Zn(2+) site is built by E291 and D310. Sulfate-binding positions include 318-323 (NLLTPR) and R328. H355 serves as a coordination point for Zn(2+). Y417 contacts sulfate.

This sequence belongs to the metallo-beta-lactamase superfamily. Type III sulfatase family. Homodimer.

It carries out the reaction an (R)-secondary-alkyl sulfate + H2O = an (S)-secondary-alcohol + sulfate.. Alkylsulfatase that catalyzes the enantioselective hydrolysis of secondary-alkylsulfates with strict inversion of configuration, leading to the formation of homochiral (S)-configurated alcohols and nonreacted sulfate esters. The substrate spectrum includes a range of linear, branched or cyclic sec-alkylsulfates. Can use sec-alkylsulfate esters bearing aromatic, olefinic and acetylenic moieties. Acts by cleaving the C-O bond, resulting in inversion at the carbon. The chain is (R)-specific secondary-alkylsulfatase from Pseudomonas sp.